We begin with the raw amino-acid sequence, 175 residues long: Transcription factor HES-3 (175 aa).

Residues 1–49 (MEKKRRARINVSLEQLRSLLERHYSHQIRKRKLEKADILELSVKYMRSL) enclose the bHLH domain. The Orange domain occupies 65 to 98 (YPSGFQGGLRGVSQRLRPGEGDSGLRCPLLLQRR). Positions 126–166 (RAAGGSHSPQSPLPLPGGLLESSTDVVAPHPASNCQAESTR) are disordered. Positions 129–148 (GGSHSPQSPLPLPGGLLESS) are enriched in low complexity. The WRPW motif motif lies at 172–175 (WRPW).

Transcription repression requires formation of a complex with a corepressor protein of the Groucho/TLE family.

The protein localises to the nucleus. Its function is as follows. Transcriptional repressor of genes that require a bHLH protein for their transcription. The sequence is that of Transcription factor HES-3 (Hes3) from Mus musculus (Mouse).